A 461-amino-acid chain; its full sequence is L-seryl-tRNA(Sec) selenium transferase (461 aa).

The residue at position 294 (Lys294) is an N6-(pyridoxal phosphate)lysine.

The protein belongs to the SelA family. Pyridoxal 5'-phosphate is required as a cofactor.

It is found in the cytoplasm. It catalyses the reaction L-seryl-tRNA(Sec) + selenophosphate + H(+) = L-selenocysteinyl-tRNA(Sec) + phosphate. It functions in the pathway aminoacyl-tRNA biosynthesis; selenocysteinyl-tRNA(Sec) biosynthesis; selenocysteinyl-tRNA(Sec) from L-seryl-tRNA(Sec) (bacterial route): step 1/1. Converts seryl-tRNA(Sec) to selenocysteinyl-tRNA(Sec) required for selenoprotein biosynthesis. The polypeptide is L-seryl-tRNA(Sec) selenium transferase (Haemophilus influenzae (strain PittEE)).